The chain runs to 483 residues: Aspartyl/glutamyl-tRNA(Asn/Gln) amidotransferase subunit B (483 aa).

Belongs to the GatB/GatE family. GatB subfamily. In terms of assembly, heterotrimer of A, B and C subunits.

The enzyme catalyses L-glutamyl-tRNA(Gln) + L-glutamine + ATP + H2O = L-glutaminyl-tRNA(Gln) + L-glutamate + ADP + phosphate + H(+). The catalysed reaction is L-aspartyl-tRNA(Asn) + L-glutamine + ATP + H2O = L-asparaginyl-tRNA(Asn) + L-glutamate + ADP + phosphate + 2 H(+). Its function is as follows. Allows the formation of correctly charged Asn-tRNA(Asn) or Gln-tRNA(Gln) through the transamidation of misacylated Asp-tRNA(Asn) or Glu-tRNA(Gln) in organisms which lack either or both of asparaginyl-tRNA or glutaminyl-tRNA synthetases. The reaction takes place in the presence of glutamine and ATP through an activated phospho-Asp-tRNA(Asn) or phospho-Glu-tRNA(Gln). The chain is Aspartyl/glutamyl-tRNA(Asn/Gln) amidotransferase subunit B from Anaplasma phagocytophilum (strain HZ).